Reading from the N-terminus, the 145-residue chain is uncharacterized protein (145 aa).

The protein belongs to the methyltransferase superfamily.

In terms of biological role, probable methyltransferase. This is an uncharacterized protein from Schizosaccharomyces pombe (strain 972 / ATCC 24843) (Fission yeast).